The primary structure comprises 160 residues: SsrA-binding protein (160 aa).

It belongs to the SmpB family.

The protein localises to the cytoplasm. Required for rescue of stalled ribosomes mediated by trans-translation. Binds to transfer-messenger RNA (tmRNA), required for stable association of tmRNA with ribosomes. tmRNA and SmpB together mimic tRNA shape, replacing the anticodon stem-loop with SmpB. tmRNA is encoded by the ssrA gene; the 2 termini fold to resemble tRNA(Ala) and it encodes a 'tag peptide', a short internal open reading frame. During trans-translation Ala-aminoacylated tmRNA acts like a tRNA, entering the A-site of stalled ribosomes, displacing the stalled mRNA. The ribosome then switches to translate the ORF on the tmRNA; the nascent peptide is terminated with the 'tag peptide' encoded by the tmRNA and targeted for degradation. The ribosome is freed to recommence translation, which seems to be the essential function of trans-translation. This is SsrA-binding protein from Pectobacterium carotovorum subsp. carotovorum (strain PC1).